A 147-amino-acid chain; its full sequence is MVFGQQLRNLDEKNRIALPPAFKNKLVEPLYLTIGFDGQADLRSEKEFEKFSAFLDQKNPFDAKIRQIKRQINSNTFEITLDKQGRITIPARIMQWIFAGEELGKEIYFVGAKDYVEIWSKSKFEALNEKVTPVGLEKLVEQAYNEK.

SpoVT-AbrB domains follow at residues 5–47 (QQLR…SEKE) and 76–123 (TFEI…SKSK).

The protein belongs to the MraZ family. In terms of assembly, forms oligomers.

Its subcellular location is the cytoplasm. The protein resides in the nucleoid. In Mycoplasmopsis synoviae (strain 53) (Mycoplasma synoviae), this protein is Transcriptional regulator MraZ.